A 384-amino-acid polypeptide reads, in one-letter code: Calreticulin-3 (384 aa).

The signal sequence occupies residues 1 to 19 (MARALVQLWAICMLRVALA). The segment at 20-197 (TVYFQEEFLD…GQSIESGSIE (178 aa)) is N-domain. Asn-42 carries an N-linked (GlcNAc...) asparagine glycan. A disulfide bridge links Cys-105 with Cys-137. An alpha-D-glucoside contacts are provided by Tyr-109, Lys-111, Tyr-128, and Asp-135. 7 consecutive repeat copies span residues 191 to 202 (IESGSIEYDWNL), 208 to 219 (ETSPAESKDWEQ), 221 to 230 (KDNKAQDWEK), 234 to 245 (DASTSKQSDWNG), 249 to 259 (GDWPAPMLQKP), 263 to 271 (DGLKPEGIH), and 273 to 283 (DVWLHRKMKNT). The segment at 191–245 (IESGSIEYDWNLTSLKKETSPAESKDWEQTKDNKAQDWEKHFLDASTSKQSDWNG) is 4 X approximate repeats. A P-domain region spans residues 198-294 (YDWNLTSLKK…YLTQYDLSEF (97 aa)). An N-linked (GlcNAc...) asparagine glycan is attached at Asn-201. Residues 249–283 (GDWPAPMLQKPPYQDGLKPEGIHKDVWLHRKMKNT) are 3 X approximate repeats. The interval 295–384 (ENIGAIGLEL…FNQFHRRNEL (90 aa)) is C-domain. Position 303 (Glu-303) interacts with an alpha-D-glucoside. The short motif at 381-384 (RNEL) is the Prevents secretion from ER element.

Belongs to the calreticulin family. As to quaternary structure, component of an EIF2 complex at least composed of CELF1/CUGBP1, CALR, CALR3, EIF2S1, EIF2S2, HSP90B1 and HSPA5. As to expression, testis specific.

It localises to the endoplasmic reticulum lumen. In terms of biological role, during spermatogenesis, may act as a lectin-independent chaperone for specific client proteins such as ADAM3. Required for sperm fertility. CALR3 capacity for calcium-binding may be absent or much lower than that of CALR. The polypeptide is Calreticulin-3 (CALR3) (Homo sapiens (Human)).